A 443-amino-acid chain; its full sequence is ATP-dependent protease ATPase subunit HslU (443 aa).

Residues I18, 60–65 (GVGKTE), D256, E321, and R393 each bind ATP.

Belongs to the ClpX chaperone family. HslU subfamily. A double ring-shaped homohexamer of HslV is capped on each side by a ring-shaped HslU homohexamer. The assembly of the HslU/HslV complex is dependent on binding of ATP.

The protein localises to the cytoplasm. Functionally, ATPase subunit of a proteasome-like degradation complex; this subunit has chaperone activity. The binding of ATP and its subsequent hydrolysis by HslU are essential for unfolding of protein substrates subsequently hydrolyzed by HslV. HslU recognizes the N-terminal part of its protein substrates and unfolds these before they are guided to HslV for hydrolysis. This Buchnera aphidicola subsp. Acyrthosiphon pisum (strain APS) (Acyrthosiphon pisum symbiotic bacterium) protein is ATP-dependent protease ATPase subunit HslU.